We begin with the raw amino-acid sequence, 770 residues long: POU domain, class 2, transcription factor 1 (770 aa).

Residues 1–26 (MNNPSETNKSSMESEDASTGTQTNGL) show a composition bias toward polar residues. 4 disordered regions span residues 1 to 33 (MNNP…KQPV), 68 to 97 (LNVQ…VQSA), 262 to 285 (VQTL…EPSD), and 357 to 385 (LSSD…RRKK). The span at 80–97 (DSQQSSQPSSQPPSVQSA) shows a compositional bias: low complexity. Over residues 262 to 272 (VQTLPQSQSTP) the composition is skewed to polar residues. Phosphothreonine occurs at positions 271 and 277. One can recognise a POU-specific domain in the interval 281 to 355 (EEPSDLEELE…LLEKWLNDAE (75 aa)). Serine 284 carries the post-translational modification Phosphoserine. Positions 357–372 (LSSDSTASSPSALNSP) are enriched in low complexity. A DNA-binding region (homeobox) is located at residues 382 to 441 (RRKKRTSIETNIRVALEKSFMENQKPTSEDITLIAEQLNMEKEVIRVWFCNRRQKEKRIN). 2 positions are modified to phosphoserine: serine 388 and serine 451. The segment covering 519 to 580 (TTTAGTTDST…TNTTQTTSTP (62 aa)) has biased composition (low complexity). The segment at 519–589 (TTTAGTTDST…PLPSPLGASQ (71 aa)) is disordered.

The protein belongs to the POU transcription factor family. Class-2 subfamily. Interacts with POU2AF1; the interaction increases POU2F1 transactivation activity. Interacts with NR3C1, AR, PGR and HCFC1. In terms of processing, phosphorylated by PRKDC. In terms of tissue distribution, ubiquitously expressed. However, isoforms 4 and 5 are only expressed in lymphocytes.

The protein localises to the nucleus. Functionally, transcription factor that binds to the octamer motif (5'-ATTTGCAT-3') and activates the promoters of the genes for some small nuclear RNAs (snRNA) and of genes such as those for histone H2B and immunoglobulins. Modulates transcription transactivation by NR3C1, AR and PGR. In Mus musculus (Mouse), this protein is POU domain, class 2, transcription factor 1 (Pou2f1).